The sequence spans 902 residues: Protein translocase subunit SecA (902 aa).

ATP is bound by residues Gln87, 105 to 109, and Asp512; that span reads GEGKT. The tract at residues 851–902 is disordered; the sequence is LARQQQLSHQAPVEELTQGSAAAAQEGRKVGRNDPCPCGSGKKFKHCHGKLQ. Residues Cys886, Cys888, Cys897, and His898 each coordinate Zn(2+). A compositionally biased stretch (basic residues) spans 892–902; it reads KKFKHCHGKLQ.

This sequence belongs to the SecA family. In terms of assembly, monomer and homodimer. Part of the essential Sec protein translocation apparatus which comprises SecA, SecYEG and auxiliary proteins SecDF-YajC and YidC. The cofactor is Zn(2+).

It is found in the cell inner membrane. Its subcellular location is the cytoplasm. It catalyses the reaction ATP + H2O + cellular proteinSide 1 = ADP + phosphate + cellular proteinSide 2.. In terms of biological role, part of the Sec protein translocase complex. Interacts with the SecYEG preprotein conducting channel. Has a central role in coupling the hydrolysis of ATP to the transfer of proteins into and across the cell membrane, serving both as a receptor for the preprotein-SecB complex and as an ATP-driven molecular motor driving the stepwise translocation of polypeptide chains across the membrane. This chain is Protein translocase subunit SecA, found in Sodalis glossinidius (strain morsitans).